The primary structure comprises 88 residues: Monensin polyketide synthase acyl carrier protein (88 aa).

A Carrier domain is found at 5–82 (PFTLADLQRI…ELIDHVNERL (78 aa)). Ser42 carries the O-(pantetheine 4'-phosphoryl)serine modification.

In terms of processing, 4'-phosphopantetheine is transferred from CoA to a specific serine of the apo-ACP-like protein.

Its pathway is antifungal biosynthesis; monensin biosynthesis. In terms of biological role, acyl carrier protein. The protein is Monensin polyketide synthase acyl carrier protein of Streptomyces virginiae (Streptomyces cinnamonensis).